The sequence spans 599 residues: UvrABC system protein C (599 aa).

The region spanning 15 to 93 (EKPGCYQYFD…IKEYQPRYNV (79 aa)) is the GIY-YIG domain. Positions 207–242 (HRLVRMYRDRMQVYSEGLRFEEAQICKERIELLERY) constitute a UVR domain.

It belongs to the UvrC family. Interacts with UvrB in an incision complex.

The protein resides in the cytoplasm. The UvrABC repair system catalyzes the recognition and processing of DNA lesions. UvrC both incises the 5' and 3' sides of the lesion. The N-terminal half is responsible for the 3' incision and the C-terminal half is responsible for the 5' incision. This Porphyromonas gingivalis (strain ATCC BAA-308 / W83) protein is UvrABC system protein C.